Reading from the N-terminus, the 440-residue chain is Chromosomal replication initiator protein DnaA (440 aa).

Residues 1-74 (MNPSQILENL…VQSGNKAIIN (74 aa)) form a domain I, interacts with DnaA modulators region. The interval 74–99 (NIQAQSAKQSNKSTKIDIAHIKAQST) is domain II. The domain III, AAA+ region stretch occupies residues 100-316 (ILNPSFTFDS…GIIISLNAYA (217 aa)). ATP-binding residues include G146, G148, K149, and T150. The domain IV, binds dsDNA stretch occupies residues 317–440 (TILGQEITLE…KNKILVKSQS (124 aa)).

The protein belongs to the DnaA family. Oligomerizes as a right-handed, spiral filament on DNA at oriC.

The protein resides in the cytoplasm. In terms of biological role, plays an essential role in the initiation and regulation of chromosomal replication. ATP-DnaA binds to the origin of replication (oriC) to initiate formation of the DNA replication initiation complex once per cell cycle. Binds the DnaA box (a 9 base pair repeat at the origin) and separates the double-stranded (ds)DNA. Forms a right-handed helical filament on oriC DNA; dsDNA binds to the exterior of the filament while single-stranded (ss)DNA is stabiized in the filament's interior. The ATP-DnaA-oriC complex binds and stabilizes one strand of the AT-rich DNA unwinding element (DUE), permitting loading of DNA polymerase. After initiation quickly degrades to an ADP-DnaA complex that is not apt for DNA replication. Binds acidic phospholipids. The sequence is that of Chromosomal replication initiator protein DnaA from Campylobacter jejuni subsp. jejuni serotype O:23/36 (strain 81-176).